We begin with the raw amino-acid sequence, 260 residues long: Adenosylcobinamide-GDP ribazoletransferase (260 aa).

Transmembrane regions (helical) follow at residues 40 to 60 (AFPF…LLLL), 64 to 84 (ADPL…TGAL), 117 to 137 (YGAI…AAIV), 142 to 162 (PLAA…AITW), 189 to 209 (FALV…FGLW), and 210 to 230 (PLVA…VFIR).

It belongs to the CobS family. Mg(2+) is required as a cofactor.

Its subcellular location is the cell inner membrane. The enzyme catalyses alpha-ribazole + adenosylcob(III)inamide-GDP = adenosylcob(III)alamin + GMP + H(+). It catalyses the reaction alpha-ribazole 5'-phosphate + adenosylcob(III)inamide-GDP = adenosylcob(III)alamin 5'-phosphate + GMP + H(+). Its pathway is cofactor biosynthesis; adenosylcobalamin biosynthesis; adenosylcobalamin from cob(II)yrinate a,c-diamide: step 7/7. In terms of biological role, joins adenosylcobinamide-GDP and alpha-ribazole to generate adenosylcobalamin (Ado-cobalamin). Also synthesizes adenosylcobalamin 5'-phosphate from adenosylcobinamide-GDP and alpha-ribazole 5'-phosphate. This Rhizobium etli (strain CIAT 652) protein is Adenosylcobinamide-GDP ribazoletransferase.